The primary structure comprises 348 residues: NADH-ubiquinone oxidoreductase chain 2 (348 aa).

Transmembrane regions (helical) follow at residues 3 to 23 (PFILSILLLSLGLGTTLTFAS), 24 to 44 (SHWLLAWMGLEISTLAIIPLM), 60 to 80 (FITQAAAAALILFASTTNAWI), 95 to 115 (ASMLTMALALKMGLAPVHFWL), 136 to 156 (LAPFILMCQIMPVNSSLITFL), 177 to 197 (ILAYSSIAHLGWMILVMQFNQ), 198 to 218 (QLALLALIIYIPMTFSTFMIF), 239 to 259 (LTAITPMILLSLGGLPPLSGF), 273 to 293 (DIPLTASIAALSALLSLYFYL), and 325 to 345 (LAISATISAMLLPLAPATLAL).

The protein belongs to the complex I subunit 2 family.

The protein localises to the mitochondrion inner membrane. It catalyses the reaction a ubiquinone + NADH + 5 H(+)(in) = a ubiquinol + NAD(+) + 4 H(+)(out). Its function is as follows. Core subunit of the mitochondrial membrane respiratory chain NADH dehydrogenase (Complex I) that is believed to belong to the minimal assembly required for catalysis. Complex I functions in the transfer of electrons from NADH to the respiratory chain. The immediate electron acceptor for the enzyme is believed to be ubiquinone. This Gadus morhua (Atlantic cod) protein is NADH-ubiquinone oxidoreductase chain 2 (MT-ND2).